Consider the following 1382-residue polypeptide: Ninein-like protein (1382 aa).

EF-hand domains are found at residues 7–42 (HYVS…LHLE) and 41–76 (LEQQ…VLSS). The segment at 144 to 164 (ASLESVESPKSDEEAESTKEA) is disordered. Ser148 carries the phosphoserine modification. The span at 150–164 (ESPKSDEEAESTKEA) shows a compositional bias: basic and acidic residues. 2 EF-hand domains span residues 196–231 (TPES…VGLQ) and 233–268 (LEKE…HEPA). Ca(2+) is bound by residues Asp246, Asp248, Asp250, Lys252, and Glu257. Coiled-coil stretches lie at residues 384 to 424 (QELS…MDDC), 484 to 579 (AGLR…WARL), and 616 to 699 (IETE…QLQD). The KEN box motif lies at 495–497 (KEN). A D-box motif is present at residues 633 to 641 (RTQLETKVN). Disordered stretches follow at residues 857–969 (PLAW…ASCR) and 982–1006 (RARS…GALE). Over residues 991–1004 (QEQASEQQARAEGA) the composition is skewed to low complexity. Residues 1046-1375 (ETKIALEREK…RALNKLVSRI (330 aa)) are a coiled coil.

As to quaternary structure, interacts with gamma-tubulin and TUBGCP4. Interacts with anaphase promoting complex/cyclosome (APC/C). Interacts with CDC20 and FZR1. Isoform 2 interacts with LCA5 and USH2A. Isoform 2 interacts with DZANK1. Phosphorylated by PLK1 which disrupts its centrosome association and interaction with gamma-tubulin. In terms of processing, ubiquitinated by the APC/C complex leading to its degradation. As to expression, expressed in KYSE-150 esophageal carcinoma, HeLa cervical carcinoma and U2OS osteosarcoma cells. Expression is regulated in a cell cycle-dependent manner and peaks during G2/M phase (at protein level). Expressed in fetal heart, skeletal muscle, liver, lung and cochlea, and in adult brain, testis, kidney and retina.

The protein localises to the cytoplasm. It is found in the cytoskeleton. It localises to the microtubule organizing center. The protein resides in the centrosome. Functionally, involved in the microtubule organization in interphase cells. Overexpression induces the fragmentation of the Golgi, and causes lysosomes to disperse toward the cell periphery; it also interferes with mitotic spindle assembly. Involved in vesicle transport in photoreceptor cells. May play a role in ovarian carcinogenesis. The polypeptide is Ninein-like protein (NINL) (Homo sapiens (Human)).